The following is a 207-amino-acid chain: Putative 3-methyladenine DNA glycosylase (207 aa).

This sequence belongs to the DNA glycosylase MPG family.

The protein is Putative 3-methyladenine DNA glycosylase of Listeria monocytogenes serovar 1/2a (strain ATCC BAA-679 / EGD-e).